A 496-amino-acid chain; its full sequence is MAGEITETGELYSSYVGLVYMFNLIVGTGALTMPKAFATAGWLVSLVLLVFLGFMSFVTTTFVIEAMAAANAQLHWKRMENLKEEEDDDSSTASDSDVLIRDNYERAEKRPILSVQRRGSPNPFEITDRVEMGQMASMFFNKVGVNLFYFCIIVYLYGDLAIYAAAVPFSLMQVTCSATGNDSCGVEADTKYNDTDRCWGPLRRVDAYRIYLAIFTLLLGPFTFFDVQKTKYLQILTSLMRWIAFAVMIVLALIRIGHGQGEGHPPLADFSGVRNLFGVCVYSFMCQHSLPSLITPVSSKRHLTRLVFLDYVLILAFYGLLSFTAIFCFRGDSLMDMYTLNFARCDVVGLAAVRFFLGLFPVFTISTNFPIIAVTLRNNWKTLFHREGGTYPWVVDRVVFPTITLVPPVLVAFCTHDLESLVGITGAYAGTGIQYVIPAFLVYHCRRDTQLAFGCGVSNKHRSPFRHTFWVGFVLLWAFSCFIFVTANIILSETKL.

Over 1–10 (MAGEITETGE) the chain is Cytoplasmic. The helical transmembrane segment at 11 to 31 (LYSSYVGLVYMFNLIVGTGAL) threads the bilayer. The Extracellular segment spans residues 32 to 36 (TMPKA). The chain crosses the membrane as a helical span at residues 37–57 (FATAGWLVSLVLLVFLGFMSF). Topologically, residues 58-146 (VTTTFVIEAM…SMFFNKVGVN (89 aa)) are cytoplasmic. The helical transmembrane segment at 147-167 (LFYFCIIVYLYGDLAIYAAAV) threads the bilayer. The Extracellular segment spans residues 168–204 (PFSLMQVTCSATGNDSCGVEADTKYNDTDRCWGPLRR). N-linked (GlcNAc...) asparagine glycosylation is present at Asn-193. The chain crosses the membrane as a helical span at residues 205-225 (VDAYRIYLAIFTLLLGPFTFF). At 226 to 233 (DVQKTKYL) the chain is on the cytoplasmic side. Residues 234-254 (QILTSLMRWIAFAVMIVLALI) form a helical membrane-spanning segment. Over 255–276 (RIGHGQGEGHPPLADFSGVRNL) the chain is Extracellular. Residues 277 to 297 (FGVCVYSFMCQHSLPSLITPV) form a helical membrane-spanning segment. Over 298–306 (SSKRHLTRL) the chain is Cytoplasmic. The chain crosses the membrane as a helical span at residues 307–327 (VFLDYVLILAFYGLLSFTAIF). The Extracellular segment spans residues 328–354 (CFRGDSLMDMYTLNFARCDVVGLAAVR). A helical transmembrane segment spans residues 355 to 375 (FFLGLFPVFTISTNFPIIAVT). Residues 376-397 (LRNNWKTLFHREGGTYPWVVDR) lie on the Cytoplasmic side of the membrane. Residues 398 to 418 (VVFPTITLVPPVLVAFCTHDL) form a helical membrane-spanning segment. The Extracellular portion of the chain corresponds to 419–421 (ESL). The helical transmembrane segment at 422 to 442 (VGITGAYAGTGIQYVIPAFLV) threads the bilayer. Topologically, residues 443–470 (YHCRRDTQLAFGCGVSNKHRSPFRHTFW) are cytoplasmic. A helical transmembrane segment spans residues 471–491 (VGFVLLWAFSCFIFVTANIIL). The Extracellular segment spans residues 492-496 (SETKL).

Belongs to the TMEM104 family.

The protein resides in the membrane. This Homo sapiens (Human) protein is Transmembrane protein 104 (TMEM104).